The primary structure comprises 179 residues: 6,7-dimethyl-8-ribityllumazine synthase (179 aa).

Residues tryptophan 13, 45–47 (AVE), and 68–70 (VVI) contribute to the 5-amino-6-(D-ribitylamino)uracil site. 73 to 74 (DT) contacts (2S)-2-hydroxy-3-oxobutyl phosphate. Catalysis depends on histidine 76, which acts as the Proton donor. Phenylalanine 101 is a 5-amino-6-(D-ribitylamino)uracil binding site. Arginine 115 is a (2S)-2-hydroxy-3-oxobutyl phosphate binding site. Residues 157–179 (AKAAKKPAKAAAKTQKKKKKVRK) are disordered.

It belongs to the DMRL synthase family.

The catalysed reaction is (2S)-2-hydroxy-3-oxobutyl phosphate + 5-amino-6-(D-ribitylamino)uracil = 6,7-dimethyl-8-(1-D-ribityl)lumazine + phosphate + 2 H2O + H(+). It functions in the pathway cofactor biosynthesis; riboflavin biosynthesis; riboflavin from 2-hydroxy-3-oxobutyl phosphate and 5-amino-6-(D-ribitylamino)uracil: step 1/2. Its function is as follows. Catalyzes the formation of 6,7-dimethyl-8-ribityllumazine by condensation of 5-amino-6-(D-ribitylamino)uracil with 3,4-dihydroxy-2-butanone 4-phosphate. This is the penultimate step in the biosynthesis of riboflavin. In Bdellovibrio bacteriovorus (strain ATCC 15356 / DSM 50701 / NCIMB 9529 / HD100), this protein is 6,7-dimethyl-8-ribityllumazine synthase.